A 170-amino-acid chain; its full sequence is Protein SprT (170 aa).

Residues 23–165 enclose the SprT-like domain; sequence QLANQHLGTD…RECGEKLQFV (143 aa). His78 is a Zn(2+) binding site. Glu79 is an active-site residue. Zn(2+) is bound at residue His82.

This sequence belongs to the SprT family. Zn(2+) serves as cofactor.

It localises to the cytoplasm. The sequence is that of Protein SprT from Yersinia enterocolitica serotype O:8 / biotype 1B (strain NCTC 13174 / 8081).